A 188-amino-acid chain; its full sequence is Probable chorismate pyruvate-lyase (188 aa).

Arg77, Leu115, and Glu174 together coordinate substrate.

The protein belongs to the UbiC family.

It localises to the cytoplasm. The enzyme catalyses chorismate = 4-hydroxybenzoate + pyruvate. It functions in the pathway cofactor biosynthesis; ubiquinone biosynthesis. In terms of biological role, removes the pyruvyl group from chorismate, with concomitant aromatization of the ring, to provide 4-hydroxybenzoate (4HB) for the ubiquinone pathway. The chain is Probable chorismate pyruvate-lyase from Shewanella loihica (strain ATCC BAA-1088 / PV-4).